The following is a 458-amino-acid chain: Flavonol 3-O-glucosyltransferase F3GT2 (458 aa).

H20 functions as the Proton acceptor in the catalytic mechanism. H20 is an an anthocyanidin binding site. The active-site Charge relay is D119. T141 lines the UDP-alpha-D-glucose pocket. An an anthocyanidin-binding site is contributed by H150. UDP-alpha-D-glucose contacts are provided by A333, Q335, H350, W353, N354, S355, and E358. An anthocyanidin is bound at residue G373. D374 and Q375 together coordinate UDP-alpha-D-glucose.

It belongs to the UDP-glycosyltransferase family. In terms of tissue distribution, expressed in ovaries.

It catalyses the reaction a flavonol + UDP-alpha-D-glucose = a flavonol 3-O-beta-D-glucoside + UDP + H(+). The protein operates within flavonoid metabolism. In terms of biological role, catalyzes the glucosylation of quercetin. Preferentially uses UDP-glucose as sugar donor, but is also able to use UDP-gal and UDP-xyl. Is probably not required for the accumulation of anthocyanin in red-fleshed kiwifruit varieties. This is Flavonol 3-O-glucosyltransferase F3GT2 from Actinidia chinensis var. chinensis (Chinese soft-hair kiwi).